A 446-amino-acid chain; its full sequence is Na(+)-translocating NADH-quinone reductase subunit A (446 aa).

It belongs to the NqrA family. As to quaternary structure, composed of six subunits; NqrA, NqrB, NqrC, NqrD, NqrE and NqrF.

It catalyses the reaction a ubiquinone + n Na(+)(in) + NADH + H(+) = a ubiquinol + n Na(+)(out) + NAD(+). NQR complex catalyzes the reduction of ubiquinone-1 to ubiquinol by two successive reactions, coupled with the transport of Na(+) ions from the cytoplasm to the periplasm. NqrA to NqrE are probably involved in the second step, the conversion of ubisemiquinone to ubiquinol. In Vibrio atlanticus (strain LGP32) (Vibrio splendidus (strain Mel32)), this protein is Na(+)-translocating NADH-quinone reductase subunit A.